The chain runs to 545 residues: Thermosome subunit beta (545 aa).

It belongs to the TCP-1 chaperonin family. As to quaternary structure, forms a Heterooligomeric complex of two stacked eight-membered rings.

Functionally, molecular chaperone; binds unfolded polypeptides in vitro, and has a weak ATPase activity. This Archaeoglobus fulgidus (strain ATCC 49558 / DSM 4304 / JCM 9628 / NBRC 100126 / VC-16) protein is Thermosome subunit beta (thsB).